The primary structure comprises 242 residues: Carboxy-S-adenosyl-L-methionine synthase (242 aa).

Residues Tyr38, Gly63–Ser65, Asp88–Asn89, Asp116–Leu117, and Arg199 each bind S-adenosyl-L-methionine.

It belongs to the class I-like SAM-binding methyltransferase superfamily. Cx-SAM synthase family. In terms of assembly, homodimer.

It carries out the reaction prephenate + S-adenosyl-L-methionine = carboxy-S-adenosyl-L-methionine + 3-phenylpyruvate + H2O. Functionally, catalyzes the conversion of S-adenosyl-L-methionine (SAM) to carboxy-S-adenosyl-L-methionine (Cx-SAM). The protein is Carboxy-S-adenosyl-L-methionine synthase of Methylococcus capsulatus (strain ATCC 33009 / NCIMB 11132 / Bath).